We begin with the raw amino-acid sequence, 166 residues long: Cytochrome c-type biogenesis protein CcmE (166 aa).

Over 1-13 (MNFLPKSRKARRR) the chain is Cytoplasmic. A helical; Signal-anchor for type II membrane protein membrane pass occupies residues 14–34 (LTILAVAAPVVALAVGLALWG). Over 35 to 166 (MRDAISLFYT…QGYKPGKPNT (132 aa)) the chain is Periplasmic. The heme site is built by His128 and Tyr132. Residues 143–166 (EQGEWRGDGQAPSYQGYKPGKPNT) are disordered.

This sequence belongs to the CcmE/CycJ family.

It localises to the cell inner membrane. Its function is as follows. Heme chaperone required for the biogenesis of c-type cytochromes. Transiently binds heme delivered by CcmC and transfers the heme to apo-cytochromes in a process facilitated by CcmF and CcmH. This chain is Cytochrome c-type biogenesis protein CcmE, found in Caulobacter sp. (strain K31).